A 116-amino-acid polypeptide reads, in one-letter code: Large ribosomal subunit protein bL20 (116 aa).

This sequence belongs to the bacterial ribosomal protein bL20 family.

Functionally, binds directly to 23S ribosomal RNA and is necessary for the in vitro assembly process of the 50S ribosomal subunit. It is not involved in the protein synthesizing functions of that subunit. The protein is Large ribosomal subunit protein bL20 of Nitratiruptor sp. (strain SB155-2).